The chain runs to 291 residues: Formamidopyrimidine-DNA glycosylase (291 aa).

P2 functions as the Schiff-base intermediate with DNA in the catalytic mechanism. Residue E3 is the Proton donor of the active site. Catalysis depends on K60, which acts as the Proton donor; for beta-elimination activity. H97, R116, and R161 together coordinate DNA. The FPG-type zinc finger occupies 246–280; it reads WVYNRAGEPCRVCGMPIQRIRLAGRSSHFCSECQT. The Proton donor; for delta-elimination activity role is filled by R270.

The protein belongs to the FPG family. In terms of assembly, monomer. Zn(2+) serves as cofactor.

It carries out the reaction Hydrolysis of DNA containing ring-opened 7-methylguanine residues, releasing 2,6-diamino-4-hydroxy-5-(N-methyl)formamidopyrimidine.. It catalyses the reaction 2'-deoxyribonucleotide-(2'-deoxyribose 5'-phosphate)-2'-deoxyribonucleotide-DNA = a 3'-end 2'-deoxyribonucleotide-(2,3-dehydro-2,3-deoxyribose 5'-phosphate)-DNA + a 5'-end 5'-phospho-2'-deoxyribonucleoside-DNA + H(+). Functionally, involved in base excision repair of DNA damaged by oxidation or by mutagenic agents. Acts as a DNA glycosylase that recognizes and removes damaged bases. Has a preference for oxidized purines, such as 7,8-dihydro-8-oxoguanine (8-oxoG). Has AP (apurinic/apyrimidinic) lyase activity and introduces nicks in the DNA strand. Cleaves the DNA backbone by beta-delta elimination to generate a single-strand break at the site of the removed base with both 3'- and 5'-phosphates. The chain is Formamidopyrimidine-DNA glycosylase from Nostoc punctiforme (strain ATCC 29133 / PCC 73102).